A 57-amino-acid chain; its full sequence is Major exported protein (57 aa).

Belongs to the hcp1 family. In terms of assembly, homodimer.

Its subcellular location is the secreted. The chain is Major exported protein from Pseudomonas syringae pv. ribicola.